We begin with the raw amino-acid sequence, 214 residues long: Ribosomal RNA small subunit methyltransferase G (214 aa).

Residues G81, M86, 132 to 133, and R147 contribute to the S-adenosyl-L-methionine site; that span reads VE.

It belongs to the methyltransferase superfamily. RNA methyltransferase RsmG family.

Its subcellular location is the cytoplasm. It carries out the reaction guanosine(527) in 16S rRNA + S-adenosyl-L-methionine = N(7)-methylguanosine(527) in 16S rRNA + S-adenosyl-L-homocysteine. Functionally, specifically methylates the N7 position of guanine in position 527 of 16S rRNA. This Pseudomonas paraeruginosa (strain DSM 24068 / PA7) (Pseudomonas aeruginosa (strain PA7)) protein is Ribosomal RNA small subunit methyltransferase G.